Reading from the N-terminus, the 421-residue chain is Inhibitor of growth protein 3 (421 aa).

The tract at residues 129–164 (PSQPVNNHHAHSHTPVEKRKYNPTSHHTATDHIPEK) is disordered. Residues K148, K165, and K167 each participate in a glycyl lysine isopeptide (Lys-Gly) (interchain with G-Cter in SUMO2) cross-link. An N6-acetyllysine modification is found at K181. A Glycyl lysine isopeptide (Lys-Gly) (interchain with G-Cter in SUMO2) cross-link involves residue K256. K264 bears the N6-acetyllysine mark. The disordered stretch occupies residues 286 to 324 (TQNASSSAADSRSGRKSKNNTKSSSQQSSSSSSSSSSSS). Residues 308 to 324 (SSSQQSSSSSSSSSSSS) show a composition bias toward low complexity. Residues 363 to 412 (PRYCICNQVSYGEMVGCDNQDCPIEWFHYGCVGLTEAPKGKWFCPQCTAA) form a PHD-type zinc finger. C366, C368, C379, C384, H390, C393, C406, and C409 together coordinate Zn(2+).

This sequence belongs to the ING family. As to quaternary structure, interacts with H3K4me3 and to a lesser extent with H3K4me2. Component of the NuA4 histone acetyltransferase complex which contains the catalytic subunit KAT5/TIP60 and the subunits EP400, TRRAP/PAF400, BRD8/SMAP, EPC1, DMAP1/DNMAP1, RUVBL1/TIP49, RUVBL2, ING3, actin, ACTL6A/BAF53A, MORF4L1/MRG15, MORF4L2/MRGX, MRGBP, YEATS4/GAS41, VPS72/YL1 and MEAF6. The NuA4 complex interacts with MYC. HTATTIP/TIP60, EPC1, and ING3 together constitute a minimal HAT complex termed Piccolo NuA4. Component of a SWR1-like complex.

The protein localises to the nucleus. Its function is as follows. Component of the NuA4 histone acetyltransferase (HAT) complex which is involved in transcriptional activation of select genes principally by acetylation of nucleosomal histones H4 and H2A. This modification may both alter nucleosome - DNA interactions and promote interaction of the modified histones with other proteins which positively regulate transcription. This complex may be required for the activation of transcriptional programs associated with oncogene and proto-oncogene mediated growth induction, tumor suppressor mediated growth arrest and replicative senescence, apoptosis, and DNA repair. NuA4 may also play a direct role in DNA repair when directly recruited to sites of DNA damage. Component of a SWR1-like complex that specifically mediates the removal of histone H2A.Z/H2AZ1 from the nucleosome. In Rattus norvegicus (Rat), this protein is Inhibitor of growth protein 3 (Ing3).